The chain runs to 208 residues: 3-demethoxyubiquinol 3-hydroxylase (208 aa).

Fe cation is bound by residues Glu57, Glu87, His90, Glu139, Glu171, and His174.

This sequence belongs to the COQ7 family. Fe cation serves as cofactor.

It localises to the cell membrane. The catalysed reaction is a 5-methoxy-2-methyl-3-(all-trans-polyprenyl)benzene-1,4-diol + AH2 + O2 = a 3-demethylubiquinol + A + H2O. The protein operates within cofactor biosynthesis; ubiquinone biosynthesis. In terms of biological role, catalyzes the hydroxylation of 2-nonaprenyl-3-methyl-6-methoxy-1,4-benzoquinol during ubiquinone biosynthesis. The sequence is that of 3-demethoxyubiquinol 3-hydroxylase from Burkholderia thailandensis (strain ATCC 700388 / DSM 13276 / CCUG 48851 / CIP 106301 / E264).